A 179-amino-acid chain; its full sequence is Large ribosomal subunit protein uL5 (179 aa).

This sequence belongs to the universal ribosomal protein uL5 family. Part of the 50S ribosomal subunit; part of the 5S rRNA/L5/L18/L25 subcomplex. Contacts the 5S rRNA and the P site tRNA. Forms a bridge to the 30S subunit in the 70S ribosome.

In terms of biological role, this is one of the proteins that bind and probably mediate the attachment of the 5S RNA into the large ribosomal subunit, where it forms part of the central protuberance. In the 70S ribosome it contacts protein S13 of the 30S subunit (bridge B1b), connecting the 2 subunits; this bridge is implicated in subunit movement. Contacts the P site tRNA; the 5S rRNA and some of its associated proteins might help stabilize positioning of ribosome-bound tRNAs. The protein is Large ribosomal subunit protein uL5 of Pseudomonas savastanoi pv. phaseolicola (strain 1448A / Race 6) (Pseudomonas syringae pv. phaseolicola (strain 1448A / Race 6)).